Here is a 717-residue protein sequence, read N- to C-terminus: DNA ligase (717 aa).

Residues 44–48 (DADYD), 93–94 (SL), and Glu127 each bind NAD(+). The N6-AMP-lysine intermediate role is filled by Lys129. Positions 150, 186, 302, and 326 each coordinate NAD(+). Residues Cys431, Cys434, Cys455, and Cys461 each coordinate Zn(2+). The 79-residue stretch at 639 to 717 (ATDSPVAGKT…EDEWLALIGG (79 aa)) folds into the BRCT domain.

The protein belongs to the NAD-dependent DNA ligase family. LigA subfamily. Requires Mg(2+) as cofactor. Mn(2+) serves as cofactor.

It catalyses the reaction NAD(+) + (deoxyribonucleotide)n-3'-hydroxyl + 5'-phospho-(deoxyribonucleotide)m = (deoxyribonucleotide)n+m + AMP + beta-nicotinamide D-nucleotide.. In terms of biological role, DNA ligase that catalyzes the formation of phosphodiester linkages between 5'-phosphoryl and 3'-hydroxyl groups in double-stranded DNA using NAD as a coenzyme and as the energy source for the reaction. It is essential for DNA replication and repair of damaged DNA. The chain is DNA ligase from Rhizobium meliloti (strain 1021) (Ensifer meliloti).